The sequence spans 220 residues: Small ribosomal subunit protein eS8 (220 aa).

2 disordered regions span residues 1–41 (MGIS…LSSN) and 131–151 (AKKD…KKSN). The span at 8 to 26 (MHKRRATGGKQKAWRKKRK) shows a compositional bias: basic residues.

This sequence belongs to the eukaryotic ribosomal protein eS8 family.

The chain is Small ribosomal subunit protein eS8 (RPS8) from Oryza sativa subsp. japonica (Rice).